A 474-amino-acid chain; its full sequence is ATP synthase subunit beta (474 aa).

ATP is bound at residue 151–158; it reads GGAGVGKT.

The protein belongs to the ATPase alpha/beta chains family. In terms of assembly, F-type ATPases have 2 components, CF(1) - the catalytic core - and CF(0) - the membrane proton channel. CF(1) has five subunits: alpha(3), beta(3), gamma(1), delta(1), epsilon(1). CF(0) has three main subunits: a(1), b(2) and c(9-12). The alpha and beta chains form an alternating ring which encloses part of the gamma chain. CF(1) is attached to CF(0) by a central stalk formed by the gamma and epsilon chains, while a peripheral stalk is formed by the delta and b chains.

Its subcellular location is the cell inner membrane. It carries out the reaction ATP + H2O + 4 H(+)(in) = ADP + phosphate + 5 H(+)(out). Its function is as follows. Produces ATP from ADP in the presence of a proton gradient across the membrane. The catalytic sites are hosted primarily by the beta subunits. In Paracoccus denitrificans (strain Pd 1222), this protein is ATP synthase subunit beta.